The following is a 242-amino-acid chain: ATP synthase subunit a (242 aa).

Helical transmembrane passes span 29 to 49 (SSIY…LAFY), 84 to 104 (FIPL…LGMT), 114 to 134 (IIVT…VGFV), 140 to 160 (FLTL…IIVI), 181 to 201 (MAGH…MIYL), and 203 to 223 (FLPI…AILQ).

It belongs to the ATPase A chain family. In terms of assembly, F-type ATPases have 2 components, CF(1) - the catalytic core - and CF(0) - the membrane proton channel. CF(1) has five subunits: alpha(3), beta(3), gamma(1), delta(1), epsilon(1). CF(0) has three main subunits: a(1), b(2) and c(9-12). The alpha and beta chains form an alternating ring which encloses part of the gamma chain. CF(1) is attached to CF(0) by a central stalk formed by the gamma and epsilon chains, while a peripheral stalk is formed by the delta and b chains.

Its subcellular location is the cell inner membrane. Key component of the proton channel; it plays a direct role in the translocation of protons across the membrane. In Rickettsia peacockii (strain Rustic), this protein is ATP synthase subunit a.